The sequence spans 421 residues: MRRHSSKSGVALPPVGQGPDACQMLTRAQLGQDPPQRTVLGVLTENEQYRRACGQEIATIRCFSGSENVFPAAGKKVLPDNGVSEPAKHGFDIYMDDPEQGDRDSCPGREGIVFEDVYEVDTSMLKSDLHFLLDFNTVSPMLVDSTAHAQSEEATDFGSDVINVTEYAEEIHRYLREAEVRHRPKAHYMRKQPDITEGMRAILVDWLVEVGEEYKLRTETLYLAVNFLDRFLSCMSVLRGKLQLVGTAAILLASKYEEIYPPDVDEFVYITDDTYTKRQLLRMEHLLLKVLAFDLTVPTTNQFLLQYLRRQGVCIRTENLAKYVAELSLLEADPFLKYLPSLVAAAAYCLANYIVNRHFWPETLAAFTGYSLNEIVPCLSELHKACLSIPHRPQQAIREKYKASKYLHVSLMEPPVVLPLQ.

The segment at 1 to 20 (MRRHSSKSGVALPPVGQGPD) is disordered.

The protein belongs to the cyclin family. Cyclin AB subfamily. In terms of assembly, interacts with the CDK2 and the CDC2 protein kinases to form a serine/threonine kinase holoenzyme complex. The cyclin subunit imparts substrate specificity to the complex. Does not bind CDK4 and CDK5 (in vitro). The cyclin A1-CDK2 complex interacts with transcription factor E2F-1 and RB proteins. Found in a complex with CDK2, CABLES1 and CCNE1. Interacts with INCA1 and KLHDC9. Polyubiquitinated via 'Lys-11'-linked ubiquitin by the anaphase-promoting complex (APC/C), leading to its degradation by the proteasome. Deubiquitinated and stabilized by USP37 enables entry into S phase. Ubiquitinated during the G1 phase by the SCF(FBXO31) complex, leading to its proteasomal degradation.

The protein localises to the nucleus. May be involved in the control of the cell cycle at the G1/S (start) and G2/M (mitosis) transitions. May primarily function in the control of the germline meiotic cell cycle and additionally in the control of mitotic cell cycle in some somatic cells. This chain is Cyclin-A1 (Ccna1), found in Rattus norvegicus (Rat).